We begin with the raw amino-acid sequence, 320 residues long: Methyltransferase gedG (320 aa).

The methyltransferase domain stretch occupies residues 61–154 (DAGAGNGVYS…QLRPGGTFAC (94 aa)). The tract at residues 231–252 (GLLPPERRGEVTEPDHEGPHDQ) is disordered. Over residues 235–252 (PERRGEVTEPDHEGPHDQ) the composition is skewed to basic and acidic residues.

The protein belongs to the methyltransferase superfamily.

It participates in secondary metabolite biosynthesis. In terms of biological role, methyltransferase; part of the gene cluster that mediates the biosynthesis of geodin, an intermediate in the biosynthesis of other natural products. The pathway begins with the synthesis of atrochrysone thioester by the polyketide synthase (PKS) gedC. The atrochrysone carboxyl ACP thioesterase gedB then breaks the thioester bond and releases the atrochrysone carboxylic acid from gedC. The atrochrysone carboxylic acid is then converted to atrochrysone which is further transformed into emodinanthrone. The next step is performed by the emodinanthrone oxygenase gedH that catalyzes the oxidation of emodinanthrone to emodin. Emodin O-methyltransferase encoded probably by gedA then catalyzes methylation of the 8-hydroxy group of emodin to form questin. Ring cleavage of questin by questin oxidase gedK leads to desmethylsulochrin via several intermediates including questin epoxide. Another methylation step probably catalyzed by methyltransferase gedG leads to the formation of sulochrin which is further converted to dihydrogeodin by the sulochrin halogenase gedL. Finally, the dihydrogeodin oxidase gedJ catalyzes the stereospecific phenol oxidative coupling reaction converting dihydrogeodin to geodin. This chain is Methyltransferase gedG, found in Aspergillus terreus (strain NIH 2624 / FGSC A1156).